Reading from the N-terminus, the 295-residue chain is Succinate dehydrogenase [ubiquinone] iron-sulfur subunit, mitochondrial (295 aa).

The 2Fe-2S ferredoxin-type domain occupies glutamate 67 to methionine 144. [2Fe-2S] cluster-binding residues include cysteine 106, cysteine 111, cysteine 114, and cysteine 126. The 4Fe-4S ferredoxin-type domain maps to glutamate 185–tyrosine 215. 3 residues coordinate [4Fe-4S] cluster: cysteine 195, cysteine 198, and cysteine 201. A [3Fe-4S] cluster-binding site is contributed by cysteine 205. Residue tryptophan 210 coordinates a ubiquinone. 2 residues coordinate [3Fe-4S] cluster: cysteine 252 and cysteine 258. Cysteine 262 serves as a coordination point for [4Fe-4S] cluster.

The protein belongs to the succinate dehydrogenase/fumarate reductase iron-sulfur protein family. Component of complex II composed of four subunits: a flavoprotein (FP), an iron-sulfur protein (IP), and a cytochrome b composed of a large and a small subunit. Requires [2Fe-2S] cluster as cofactor. The cofactor is [3Fe-4S] cluster. [4Fe-4S] cluster is required as a cofactor.

Its subcellular location is the mitochondrion inner membrane. The enzyme catalyses a quinone + succinate = fumarate + a quinol. Its pathway is carbohydrate metabolism; tricarboxylic acid cycle; fumarate from succinate (eukaryal route): step 1/1. Its function is as follows. Iron-sulfur protein (IP) subunit of succinate dehydrogenase (SDH) that is involved in complex II of the mitochondrial electron transport chain and is responsible for transferring electrons from succinate to ubiquinone (coenzyme Q). This Mycosarcoma maydis (Corn smut fungus) protein is Succinate dehydrogenase [ubiquinone] iron-sulfur subunit, mitochondrial (SDH2).